An 840-amino-acid chain; its full sequence is DNA mismatch repair protein MutS (840 aa).

Position 601–608 (601–608 (GPNMSGKS)) interacts with ATP.

It belongs to the DNA mismatch repair MutS family.

This protein is involved in the repair of mismatches in DNA. It is possible that it carries out the mismatch recognition step. This protein has a weak ATPase activity. The sequence is that of DNA mismatch repair protein MutS from Lactococcus lactis subsp. cremoris (strain SK11).